A 346-amino-acid chain; its full sequence is UDP-N-acetylenolpyruvoylglucosamine reductase (346 aa).

The FAD-binding PCMH-type domain maps to 23–194 (FDVRARLACR…VSVTFRLPKV (172 aa)). R170 is an active-site residue. S246 serves as the catalytic Proton donor. E342 is a catalytic residue.

The protein belongs to the MurB family. FAD is required as a cofactor.

Its subcellular location is the cytoplasm. The enzyme catalyses UDP-N-acetyl-alpha-D-muramate + NADP(+) = UDP-N-acetyl-3-O-(1-carboxyvinyl)-alpha-D-glucosamine + NADPH + H(+). It participates in cell wall biogenesis; peptidoglycan biosynthesis. In terms of biological role, cell wall formation. The protein is UDP-N-acetylenolpyruvoylglucosamine reductase of Paraburkholderia phymatum (strain DSM 17167 / CIP 108236 / LMG 21445 / STM815) (Burkholderia phymatum).